The chain runs to 757 residues: Polyribonucleotide nucleotidyltransferase (757 aa).

Residues Asp482 and Asp488 each coordinate Mg(2+). The 60-residue stretch at 549-608 (PRMLSFYIDKDKISAAIGSKGKNIRSVCERSNAKIEIGDDGKVSVFATSGTEAEIAKSMM) folds into the KH domain. One can recognise an S1 motif domain in the interval 618-686 (GSIVDVKVVR…KGGCPKLSRR (69 aa)). A disordered region spans residues 698–757 (GELYNEERKDGPNDRDNYYNNSFSRKPGGSHHKRPPRPHSGFSNRNRPKFGNNDSSSGFY). The segment covering 702–714 (NEERKDGPNDRDN) has biased composition (basic and acidic residues). Positions 725–734 (GGSHHKRPPR) are enriched in basic residues.

The protein belongs to the polyribonucleotide nucleotidyltransferase family. Mg(2+) serves as cofactor.

It localises to the cytoplasm. It catalyses the reaction RNA(n+1) + phosphate = RNA(n) + a ribonucleoside 5'-diphosphate. Involved in mRNA degradation. Catalyzes the phosphorolysis of single-stranded polyribonucleotides processively in the 3'- to 5'-direction. This chain is Polyribonucleotide nucleotidyltransferase, found in Wolbachia pipientis wMel.